Reading from the N-terminus, the 433-residue chain is MDNQQRKVQGSSSNTFIKRAFQHLKSLFTVCFTGADYLESDIELICQNEIQPQGLEKLNADSSNFYCNSLTSNQSLTTSMEALDLSSSLTTPHADKLLKLSNLIAAKSFTTERKLSAAEFLDSREIHNPFTYGFLGILYGTSRTPYLHAQYANSFMSESAVPISIELNNREAKASMNLAEKNFPEGFEDFVSFLENPNIPLTVLLHHVMLYDLYSNNLKDAVWVAVTNYMKNLVGNYGYTELHIRAAQQMFGHPRFLLVHPEDIYCISGSSDWVCVSTQHFHCNIHVHSVSGNAIRKSRNPIIQDLSSICQNSTEFGWLALTHALRKKGAIFPIHAYLNFNAKLYEECIPPSILYFNKNDENINVGNIEDITNYMYETFINEASLCDKFMKRKHERIETPLSSQGREISNTLSRKRGAKGSNPFEIENMMPHA.

A compositionally biased stretch (polar residues) spans 401-412 (LSSQGREISNTL). The tract at residues 401 to 433 (LSSQGREISNTLSRKRGAKGSNPFEIENMMPHA) is disordered.

Belongs to the UPF0300 family.

It is found in the golgi apparatus. Functionally, has a role in meiosis. This is Meiotically up-regulated gene 131 protein (mug131) from Schizosaccharomyces pombe (strain 972 / ATCC 24843) (Fission yeast).